Here is a 307-residue protein sequence, read N- to C-terminus: Heme A synthase (307 aa).

The Cytoplasmic portion of the chain corresponds to 1-8 (MQHNRYLK). A helical transmembrane segment spans residues 9-29 (WFAVAATVGMLLILLGGALVT). Topologically, residues 30 to 56 (KTDSGLGCGRNWPDCNGSLIPKEITPE) are extracellular. A disulfide bridge connects residues Cys-37 and Cys-44. The chain crosses the membrane as a helical span at residues 57 to 77 (VLIEFSHRLVTGVVSISILVL). The active site involves Glu-60. Residue His-63 coordinates heme o. Residues 78 to 92 (TVWTWRKLGHIREVK) lie on the Cytoplasmic side of the membrane. A helical transmembrane segment spans residues 93-113 (LLGFLAMFFLIAQALIGAAQV). Topologically, residues 114–123 (LWGQGDFILA) are extracellular. The chain crosses the membrane as a helical span at residues 124-144 (LHFGISLISFAAVLLLSMIVF). His-125 contacts heme o. The Cytoplasmic portion of the chain corresponds to 145 to 161 (EVDRKFDADNVFIGKKL). The helical transmembrane segment at 162-182 (RWHTIAVTIYSYLVVYTGALV) threads the bilayer. Residues 183-218 (RHTDSSLICPDWPFCYNETPLASPNNMYEWVQMGHR) lie on the Extracellular side of the membrane. Cys-191 and Cys-197 form a disulfide bridge. His-217 is a binding site for heme b. The chain crosses the membrane as a helical span at residues 219 to 239 (LAVLIIFIWIAYITWHAVKEY). Residues 240–247 (KNQRVVYY) lie on the Cytoplasmic side of the membrane. The chain crosses the membrane as a helical span at residues 248–268 (GWIIAFTIVFLQVIAGMLVVL). Residues 269–276 (TKLNLTVA) are Extracellular-facing. Residues 277-297 (LMHSLLISLLFGLLCYMIMLV) form a helical membrane-spanning segment. Residue His-279 coordinates heme b. The Cytoplasmic segment spans residues 298–307 (ARSNYNEKMK).

Belongs to the COX15/CtaA family. Type 1 subfamily. Interacts with CtaB. Requires heme b as cofactor.

The protein resides in the cell membrane. It catalyses the reaction Fe(II)-heme o + 2 A + H2O = Fe(II)-heme a + 2 AH2. Its pathway is porphyrin-containing compound metabolism; heme A biosynthesis; heme A from heme O: step 1/1. In terms of biological role, catalyzes the conversion of heme O to heme A by two successive hydroxylations of the methyl group at C8. The first hydroxylation forms heme I, the second hydroxylation results in an unstable dihydroxymethyl group, which spontaneously dehydrates, resulting in the formyl group of heme A. The sequence is that of Heme A synthase from Lysinibacillus sphaericus (strain C3-41).